A 720-amino-acid polypeptide reads, in one-letter code: Polyribonucleotide nucleotidyltransferase (720 aa).

Mg(2+) is bound by residues Asp484 and Asp490. The 60-residue stretch at 551–610 (PRMYKINIDPSKIGSVIGSGGKTIRSIIEQTNTTVDIENDGTVVIGAIDEASAKKAIKII) folds into the KH domain. The S1 motif domain occupies 620–688 (GSIYTGKVTR…NQGRVNLSHR (69 aa)). The interval 697 to 720 (PISRNRDSQPRRPGPFRPSDRSNS) is disordered.

Belongs to the polyribonucleotide nucleotidyltransferase family. The cofactor is Mg(2+).

It localises to the cytoplasm. It catalyses the reaction RNA(n+1) + phosphate = RNA(n) + a ribonucleoside 5'-diphosphate. Involved in mRNA degradation. Catalyzes the phosphorolysis of single-stranded polyribonucleotides processively in the 3'- to 5'-direction. This is Polyribonucleotide nucleotidyltransferase from Dehalococcoides mccartyi (strain ATCC BAA-2100 / JCM 16839 / KCTC 5957 / BAV1).